Reading from the N-terminus, the 300-residue chain is Large ribosomal subunit protein uL18 (300 aa).

The span at 246–267 (NIRSDPKRDRKPKKDVSKEPKR) shows a compositional bias: basic and acidic residues. The segment at 246–276 (NIRSDPKRDRKPKKDVSKEPKRWNAKKLTNA) is disordered.

The protein belongs to the universal ribosomal protein uL18 family. In terms of assembly, component of the large ribosomal subunit (LSU).

The protein localises to the cytoplasm. Its subcellular location is the nucleus. Component of the ribosome, a large ribonucleoprotein complex responsible for the synthesis of proteins in the cell. The small ribosomal subunit (SSU) binds messenger RNAs (mRNAs) and translates the encoded message by selecting cognate aminoacyl-transfer RNA (tRNA) molecules. The large subunit (LSU) contains the ribosomal catalytic site termed the peptidyl transferase center (PTC), which catalyzes the formation of peptide bonds, thereby polymerizing the amino acids delivered by tRNAs into a polypeptide chain. The nascent polypeptides leave the ribosome through a tunnel in the LSU and interact with protein factors that function in enzymatic processing, targeting, and the membrane insertion of nascent chains at the exit of the ribosomal tunnel. In Toxoptera citricida (Brown citrus aphid), this protein is Large ribosomal subunit protein uL18 (RpL5).